A 58-amino-acid polypeptide reads, in one-letter code: U8-ctenitoxin-Pr1a (58 aa).

Cystine bridges form between Cys2-Cys16, Cys9-Cys22, Cys15-Cys40, Cys24-Cys38, and Cys48-Cys55.

Expressed by the venom gland.

The protein localises to the secreted. No toxic effects on mice at dose levels of 5 ug per mouse. May be toxic to insects. The chain is U8-ctenitoxin-Pr1a from Phoneutria reidyi (Brazilian Amazonian armed spider).